The chain runs to 89 residues: Myrmicitoxin(1)-Pm2a (89 aa).

A signal peptide spans 1–22 (MEIPKLLYIAVIAIGLSGSLTC). Residues 23–61 (ATPLANPWGDPEAEANPEAKATAEATAEAIAEALAEPEP) constitute a propeptide that is removed on maturation. At Asn-88 the chain carries Asparagine amide.

This sequence belongs to the formicidae venom clade 1 family. In terms of tissue distribution, expressed by the venom gland.

It localises to the secreted. In terms of biological role, toxin that potently modulates mammalian voltage-gated sodium (Nav) channels, reducing the voltage threshold for activation and inhibiting channel inactivation. Shows activity on hNav1.6/SCN8A (EC(50)=176 nM), mNav1.7/SCN9A (EC(50)=102 nM) and hNav1.7 (EC(50)=154 nM). In vivo, causes spontaneous, gradual and long-lasting nocifensive behaviors by intraplantar injection in mice, as well as pronounced swelling of the injected paw. Does not have effect on insects (blowflies). The polypeptide is Myrmicitoxin(1)-Pm2a (Pogonomyrmex maricopa (Maricopa harvester ant)).